A 360-amino-acid polypeptide reads, in one-letter code: Protein YIM1-1 (360 aa).

Belongs to the YIM1 family.

It is found in the lipid droplet. The protein resides in the mitochondrion. The protein is Protein YIM1-1 (YIM1-1) of Lachancea thermotolerans (strain ATCC 56472 / CBS 6340 / NRRL Y-8284) (Yeast).